The sequence spans 192 residues: Fibroblast growth factor 4B (192 aa).

The N-terminal stretch at 1 to 22 (MTVQLALVPILLLGTAAVMVHC) is a signal peptide.

This sequence belongs to the heparin-binding growth factors family.

It is found in the secreted. Plays an important role in the regulation of embryonic development, cell proliferation, and cell differentiation. Good candidate for an inducing factor with possible roles both in mesoderm induction at the blastula stage and in the formation of the anteroposterior axis at the gastrula stage. This chain is Fibroblast growth factor 4B (fgf4-b), found in Xenopus laevis (African clawed frog).